Consider the following 257-residue polypeptide: Imidazole glycerol phosphate synthase subunit HisF (257 aa).

Catalysis depends on residues aspartate 12 and aspartate 131.

It belongs to the HisA/HisF family. In terms of assembly, heterodimer of HisH and HisF.

Its subcellular location is the cytoplasm. It carries out the reaction 5-[(5-phospho-1-deoxy-D-ribulos-1-ylimino)methylamino]-1-(5-phospho-beta-D-ribosyl)imidazole-4-carboxamide + L-glutamine = D-erythro-1-(imidazol-4-yl)glycerol 3-phosphate + 5-amino-1-(5-phospho-beta-D-ribosyl)imidazole-4-carboxamide + L-glutamate + H(+). It participates in amino-acid biosynthesis; L-histidine biosynthesis; L-histidine from 5-phospho-alpha-D-ribose 1-diphosphate: step 5/9. Functionally, IGPS catalyzes the conversion of PRFAR and glutamine to IGP, AICAR and glutamate. The HisF subunit catalyzes the cyclization activity that produces IGP and AICAR from PRFAR using the ammonia provided by the HisH subunit. The polypeptide is Imidazole glycerol phosphate synthase subunit HisF (Burkholderia thailandensis (strain ATCC 700388 / DSM 13276 / CCUG 48851 / CIP 106301 / E264)).